The chain runs to 163 residues: Large ribosomal subunit protein uL10 (163 aa).

The protein belongs to the universal ribosomal protein uL10 family. Part of the ribosomal stalk of the 50S ribosomal subunit. The N-terminus interacts with L11 and the large rRNA to form the base of the stalk. The C-terminus forms an elongated spine to which L12 dimers bind in a sequential fashion forming a multimeric L10(L12)X complex.

Its function is as follows. Forms part of the ribosomal stalk, playing a central role in the interaction of the ribosome with GTP-bound translation factors. The polypeptide is Large ribosomal subunit protein uL10 (Haemophilus influenzae (strain PittGG)).